We begin with the raw amino-acid sequence, 637 residues long: Serine/threonine protein kinase ypkA (637 aa).

A compositionally biased stretch (low complexity) spans 20–29 (TFTRSSSTST). Disordered regions lie at residues 20-63 (TFTR…SLVS) and 104-140 (SSSVRPSSSSSHSTHGQTASFAQSGRPQSTSGGINAA). A compositionally biased stretch (polar residues) spans 40 to 61 (VVSQTPSISSTNSNGINASESL). Residues 104–116 (SSSVRPSSSSSHS) show a composition bias toward low complexity. Polar residues predominate over residues 117–136 (THGQTASFAQSGRPQSTSGG). The Protein kinase domain maps to 294-551 (FDLLKVVGKG…AAEIKSHHFF (258 aa)). ATP is bound by residues 300 to 308 (VGKGSFGKV) and lysine 323. Catalysis depends on aspartate 417, which acts as the Proton acceptor. The region spanning 552–623 (ANIDWRKLLQ…NRPVAGLGDA (72 aa)) is the AGC-kinase C-terminal domain. 2 positions are modified to phosphoserine: serine 593 and serine 612. Tyrosine 613 carries the post-translational modification Phosphotyrosine.

It belongs to the protein kinase superfamily. Ser/Thr protein kinase family. Interacts with the sakA MAP kinase.

The catalysed reaction is L-seryl-[protein] + ATP = O-phospho-L-seryl-[protein] + ADP + H(+). It catalyses the reaction L-threonyl-[protein] + ATP = O-phospho-L-threonyl-[protein] + ADP + H(+). Serine/threonine protein kinase required for vegetative growth and conidiation. Important for fungal survival through the regulation of glycosphingolipid (GSL) biosynthesis and cross talks with MAP kinase pathways such as the cell wall integrity (CWI) and the high osmolarity glycerol (HOG) pathways. In Aspergillus fumigatus (strain ATCC MYA-4609 / CBS 101355 / FGSC A1100 / Af293) (Neosartorya fumigata), this protein is Serine/threonine protein kinase ypkA.